The chain runs to 463 residues: MSAPPQPWSQRFEQALHPAIARFNASIGFDIRLIEYDLSGSQAHARMLAKTGIISPEEAETLIQGLEQIRQEYRAGQFTPGIEAEDVHFAVERRLTELVGEVGKKLHTARSRNDQVGTDVRLYLRSEIDHILQQLRQWQRTLLDLAQSHVETLIPGYTHLQRAQPLSLAHHLLAYVEMAQRDIERLRQIRERVNISPLGAGALAGTTFPIDRHYTAELLGFREPYRNSLDAVSDRDFVIEFLCAASLIMVHLSRLSEEIILWASEEFAFVQLTDTCATGSSIMPQKKNPDVPELVRGKSGRVFGHLQALLVMMKGLPLAYNKDLQEDKEALFDAVDTVRACLEAMTILMAEGLVFQTQRLAAAVESDFANATDVADYLASKGVPFREAYNLVGQVVKTCVAQQKLLKDLTLEEWQALHPAFGPDIYQRIAPRQVVAARNSYGGTGFDQVRQALAAARDRLNDF.

This sequence belongs to the lyase 1 family. Argininosuccinate lyase subfamily.

The protein localises to the cytoplasm. It catalyses the reaction 2-(N(omega)-L-arginino)succinate = fumarate + L-arginine. It participates in amino-acid biosynthesis; L-arginine biosynthesis; L-arginine from L-ornithine and carbamoyl phosphate: step 3/3. This Thermosynechococcus vestitus (strain NIES-2133 / IAM M-273 / BP-1) protein is Argininosuccinate lyase.